The sequence spans 393 residues: O-phospho-L-seryl-tRNA:Cys-tRNA synthase 1 (393 aa).

Pyridoxal 5'-phosphate contacts are provided by residues 85–86 (AR), N190, and 213–215 (SGH). Residue K216 is modified to N6-(pyridoxal phosphate)lysine.

The protein belongs to the SepCysS family. In terms of assembly, homodimer. Interacts with SepRS. Pyridoxal 5'-phosphate is required as a cofactor.

It carries out the reaction O-phospho-L-seryl-tRNA(Cys) + hydrogen sulfide + H(+) = L-cysteinyl-tRNA(Cys) + phosphate. Its function is as follows. Converts O-phospho-L-seryl-tRNA(Cys) (Sep-tRNA(Cys)) to L-cysteinyl-tRNA(Cys) (Cys-tRNA(Cys)). This chain is O-phospho-L-seryl-tRNA:Cys-tRNA synthase 1, found in Methanospirillum hungatei JF-1 (strain ATCC 27890 / DSM 864 / NBRC 100397 / JF-1).